The following is a 421-amino-acid chain: Synaptotagmin-1 (421 aa).

The interval 1–40 is disordered; that stretch reads MVSESHHEALAAPPATTVAAAPPSNVTEPASPGGGGGKED. The Vesicular segment spans residues 1 to 60; that stretch reads MVSESHHEALAAPPATTVAAAPPSNVTEPASPGGGGGKEDAFSKLKEKFMNELNKIPLPP. Residues 10–23 are compositionally biased toward low complexity; sequence LAAPPATTVAAAPP. Asn-25 is a glycosylation site (N-linked (GlcNAc...) asparagine). Residues 61 to 81 traverse the membrane as a helical segment; sequence WALIAIAIVAVLLILTCCFCL. Residues Cys-77, Cys-78, Cys-80, Cys-82, and Cys-85 are each lipidated (S-palmitoyl cysteine). At 82–421 the chain is on the cytoplasmic side; that stretch reads CKKCLFKKKN…EVDAMLAVKK (340 aa). Positions 94-139 are disordered; it reads KGKEKGGKNAINMKDVKDLGKTMKDQDDDAETGLTDGEEKEEPKEV. Residues 107–118 show a composition bias toward basic and acidic residues; it reads KDVKDLGKTMKD. Over residues 119-133 the composition is skewed to acidic residues; the sequence is QDDDAETGLTDGEEK. Positions 135 to 381 are phospholipid binding; sequence EPKEVEKLGK…AIGKVFVGYN (247 aa). C2 domains are found at residues 141–260 and 272–405; these read KLGK…EEWR and KLGD…AQWH. Leu-171, Asp-172, Asp-178, Asp-230, Phe-231, Asp-232, Ser-235, Lys-236, Asp-238, Asp-303, Asp-309, Asp-363, Asp-365, and Asp-371 together coordinate Ca(2+).

Belongs to the synaptotagmin family. Homotetramer. It depends on Ca(2+) as a cofactor.

The protein resides in the cytoplasmic vesicle. The protein localises to the secretory vesicle membrane. It localises to the secretory vesicle. It is found in the synaptic vesicle membrane. Its subcellular location is the chromaffin granule membrane. The protein resides in the cytoplasm. Calcium sensor that participates in triggering neurotransmitter release at the synapse. May have a regulatory role in the membrane interactions during trafficking of synaptic vesicles at the active zone of the synapse. It binds acidic phospholipids with a specificity that requires the presence of both an acidic head group and a diacyl backbone. May play a role in dendrite formation by melanocytes. May play a role in regulating the secretion of hormones relevant to the reproduction and egg-laying of female geese. The polypeptide is Synaptotagmin-1 (Anser cygnoides (Swan goose)).